A 906-amino-acid chain; its full sequence is Centromere protein C (906 aa).

Composition is skewed to polar residues over residues 56 to 74 and 87 to 96; these read SLTS…SSSK and SSRTGEASLQ. 2 disordered regions span residues 56–115 and 141–169; these read SLTS…NEVH and QKAA…NKNI. A phosphoserine mark is found at S71 and S94. Residues 97 to 108 show a composition bias toward low complexity; that stretch reads ASAEPSEAAGGS. Residues K150 and K182 each participate in a glycyl lysine isopeptide (Lys-Gly) (interchain with G-Cter in SUMO2) cross-link. The tract at residues 197–224 is disordered; it reads VEDNLSKGQEGTSSEITQKRDDLSSDVQ. Residues 202–212 show a composition bias toward polar residues; it reads SKGQEGTSSEI. Residues 228 to 242 carry the Nuclear localization signal motif; the sequence is KKNFSELFLETVKRK. Residues K229, K240, K242, and K266 each participate in a glycyl lysine isopeptide (Lys-Gly) (interchain with G-Cter in SUMO2) cross-link. 3 disordered regions span residues 294–320, 341–596, and 623–671; these read RHLS…KSHS, AQLS…SLAI, and EYTS…EQDQ. Residues S302, S344, S363, and S404 each carry the phosphoserine modification. Polar residues predominate over residues 402–424; that stretch reads GQSSWENSNVSNTGQDKLQINSK. The span at 426 to 450 shows a compositional bias: basic and acidic residues; it reads NMKDCEEVRNEPNPKKQKPALENKK. Positions 449-466 match the Nuclear localization signal motif; sequence KKKTNSTQTNKEKSGKKF. A compositionally biased stretch (low complexity) spans 465 to 474; sequence KFFSGGSKNK. The span at 481-494 shows a compositional bias: polar residues; the sequence is TLTSRRSCRISQRP. S495 bears the Phosphoserine mark. A compositionally biased stretch (basic and acidic residues) spans 496–512; it reads EWWRVKSDESSVDRNPS. Residue K501 forms a Glycyl lysine isopeptide (Lys-Gly) (interchain with G-Cter in SUMO2) linkage. The residue at position 505 (S505) is a Phosphoserine. Residues 523 to 546 show a composition bias toward basic residues; the sequence is NKKKQTKRNHVSKRAGKKPGSSKR. Positions 525 to 540 match the Nuclear localization signal motif; the sequence is KKQTKRNHVSKRAGKK. The segment covering 626–637 has biased composition (polar residues); that stretch reads SKTQMESASNSE. Residue K640 forms a Glycyl lysine isopeptide (Lys-Gly) (interchain with G-Cter in SUMO2) linkage. A phosphoserine mark is found at S647 and S673. A Glycyl lysine isopeptide (Lys-Gly) (interchain with G-Cter in SUMO2) cross-link involves residue K692. The segment at 702–724 is MIF2 homology domain II; sequence VRRSNRIRLKPLEYWRGERVDYQ. 2 positions are modified to phosphoserine: S728 and S737. The Nuclear localization signal signature appears at 744–762; the sequence is KIKAQRNLGKVNKKVTKKP. K770 participates in a covalent cross-link: Glycyl lysine isopeptide (Lys-Gly) (interchain with G-Cter in SUMO2). The interval 853–906 is MIF2 homology domain III; it reads LVFYVNFGDLLCTLHETPYKLTTGDSFYVPSGNHYNIKNLLNVESSLLFTQIKR.

The protein belongs to the CENP-C/MIF2 family. Oligomer. Component of the CENPA-NAC complex, at least composed of CENPA, CENPC, CENPH, CENPM, CENPN, CENPT and CENPU. The CENPA-NAC complex interacts with the CENPA-CAD complex, composed of CENPI, CENPK, CENPL, CENPO, CENPP, CENPQ, CENPR and CENPS. Binds to DAXX. Interacts with DNMT3B. Interacts directly with CENPA. Identified in a centromere complex containing histones H2A, H2B and H4, and at least CENPA, CENPB, CENPC, CENPT, CENPN, HJURP, SUPT16H, SSRP1 and RSF1. Interacts with MEIKIN.

It is found in the nucleus. The protein localises to the chromosome. It localises to the centromere. Its subcellular location is the kinetochore. Functionally, component of the CENPA-NAC (nucleosome-associated) complex, a complex that plays a central role in assembly of kinetochore proteins, mitotic progression and chromosome segregation. The CENPA-NAC complex recruits the CENPA-CAD (nucleosome distal) complex and may be involved in incorporation of newly synthesized CENPA into centromeres. CENPC recruits DNA methylation and DNMT3B to both centromeric and pericentromeric satellite repeats and regulates the histone code in these regions. This chain is Centromere protein C (Cenpc), found in Mus musculus (Mouse).